The primary structure comprises 209 residues: Peptide deformylase 2 (209 aa).

Residues cysteine 101 and histidine 149 each contribute to the Fe cation site. Residue glutamate 150 is part of the active site. Histidine 153 is a binding site for Fe cation.

Belongs to the polypeptide deformylase family. It depends on Fe(2+) as a cofactor.

The catalysed reaction is N-terminal N-formyl-L-methionyl-[peptide] + H2O = N-terminal L-methionyl-[peptide] + formate. Its function is as follows. Removes the formyl group from the N-terminal Met of newly synthesized proteins. Requires at least a dipeptide for an efficient rate of reaction. N-terminal L-methionine is a prerequisite for activity but the enzyme has broad specificity at other positions. This chain is Peptide deformylase 2, found in Coxiella burnetii (strain RSA 493 / Nine Mile phase I).